The chain runs to 364 residues: Anhydro-N-acetylmuramic acid kinase (364 aa).

11–18 (GSSLDGID) serves as a coordination point for ATP.

It belongs to the anhydro-N-acetylmuramic acid kinase family.

It carries out the reaction 1,6-anhydro-N-acetyl-beta-muramate + ATP + H2O = N-acetyl-D-muramate 6-phosphate + ADP + H(+). The protein operates within amino-sugar metabolism; 1,6-anhydro-N-acetylmuramate degradation. Its pathway is cell wall biogenesis; peptidoglycan recycling. Its function is as follows. Catalyzes the specific phosphorylation of 1,6-anhydro-N-acetylmuramic acid (anhMurNAc) with the simultaneous cleavage of the 1,6-anhydro ring, generating MurNAc-6-P. Is required for the utilization of anhMurNAc either imported from the medium or derived from its own cell wall murein, and thus plays a role in cell wall recycling. The chain is Anhydro-N-acetylmuramic acid kinase from Pseudomonas syringae pv. syringae (strain B728a).